Here is a 345-residue protein sequence, read N- to C-terminus: Protein-glutamate methylesterase/protein-glutamine glutaminase 2 (345 aa).

The Response regulatory domain occupies 1–116 (MVVDDSAVVR…KQFLVDASDD (116 aa)). Asp50 carries the post-translational modification 4-aspartylphosphate. Positions 154–345 (LQTTERVVAL…AREIMAQMAG (192 aa)) constitute a CheB-type methylesterase domain. Catalysis depends on residues Ser166, His192, and Asp288.

The protein belongs to the CheB family. Phosphorylated by CheA. Phosphorylation of the N-terminal regulatory domain activates the methylesterase activity.

The protein localises to the cytoplasm. The catalysed reaction is [protein]-L-glutamate 5-O-methyl ester + H2O = L-glutamyl-[protein] + methanol + H(+). It catalyses the reaction L-glutaminyl-[protein] + H2O = L-glutamyl-[protein] + NH4(+). Functionally, involved in chemotaxis. Part of a chemotaxis signal transduction system that modulates chemotaxis in response to various stimuli. Catalyzes the demethylation of specific methylglutamate residues introduced into the chemoreceptors (methyl-accepting chemotaxis proteins or MCP) by CheR. Also mediates the irreversible deamidation of specific glutamine residues to glutamic acid. The chain is Protein-glutamate methylesterase/protein-glutamine glutaminase 2 from Albidiferax ferrireducens (strain ATCC BAA-621 / DSM 15236 / T118) (Rhodoferax ferrireducens).